A 459-amino-acid chain; its full sequence is Putrescine aminotransferase (459 aa).

Pyridoxal 5'-phosphate-binding positions include 150-151 and Gln274; that span reads GT. The residue at position 300 (Lys300) is an N6-(pyridoxal phosphate)lysine. Pyridoxal 5'-phosphate is bound at residue Thr332.

Belongs to the class-III pyridoxal-phosphate-dependent aminotransferase family. Putrescine aminotransferase subfamily. Pyridoxal 5'-phosphate is required as a cofactor.

It catalyses the reaction an alkane-alpha,omega-diamine + 2-oxoglutarate = an omega-aminoaldehyde + L-glutamate. The enzyme catalyses putrescine + 2-oxoglutarate = 1-pyrroline + L-glutamate + H2O. The catalysed reaction is cadaverine + 2-oxoglutarate = 5-aminopentanal + L-glutamate. The protein operates within amine and polyamine degradation; putrescine degradation; 4-aminobutanal from putrescine (transaminase route): step 1/1. Functionally, catalyzes the aminotransferase reaction from putrescine to 2-oxoglutarate, leading to glutamate and 4-aminobutanal, which spontaneously cyclizes to form 1-pyrroline. This is the first step in one of two pathways for putrescine degradation, where putrescine is converted into 4-aminobutanoate (gamma-aminobutyrate or GABA) via 4-aminobutanal. Also functions as a cadaverine transaminase in a a L-lysine degradation pathway to succinate that proceeds via cadaverine, glutarate and L-2-hydroxyglutarate. The polypeptide is Putrescine aminotransferase (Escherichia coli O6:K15:H31 (strain 536 / UPEC)).